A 257-amino-acid chain; its full sequence is Envelope glycoprotein (257 aa).

Residues Phe-1–Leu-229 lie on the Extracellular side of the membrane. 3 N-linked (GlcNAc...) asparagine; by host glycosylation sites follow: Asn-15, Asn-58, and Asn-68. The segment at Gly-95–Leu-115 is fusion peptide. The stretch at Ala-112–Leu-162 forms a coiled coil. Asn-130 carries N-linked (GlcNAc...) asparagine; by host glycosylation. The segment at Leu-151–Gly-167 is immunosuppression. Residue Asn-178 is glycosylated (N-linked (GlcNAc...) asparagine; by host). A coiled-coil region spans residues Ser-180–Trp-210. Residues Leu-230 to Val-250 form a helical membrane-spanning segment. Residue Cys-245 is the site of S-palmitoyl cysteine; by host attachment. Topologically, residues Ser-251–Met-257 are cytoplasmic.

The mature envelope protein (Env) consists of a trimer of SU-TM heterodimers attached by noncovalent interactions or by a labile interchain disulfide bond. In terms of processing, specific enzymatic cleavages in vivo yield mature proteins. Envelope glycoproteins are synthesized as an inactive precursor that is N-glycosylated and processed likely by host cell furin or by a furin-like protease in the Golgi to yield the mature SU and TM proteins. The cleavage site between SU and TM requires the minimal sequence [KR]-X-[KR]-R. The transmembrane protein is palmitoylated.

The protein resides in the virion membrane. The protein localises to the host cell membrane. Functionally, the surface protein (SU) attaches the virus to the host cell by binding to its receptor. This interaction triggers the refolding of the transmembrane protein (TM) and is thought to activate its fusogenic potential by unmasking its fusion peptide. Fusion occurs at the host cell plasma membrane. Its function is as follows. The transmembrane protein (TM) acts as a class I viral fusion protein. Under the current model, the protein has at least 3 conformational states: pre-fusion native state, pre-hairpin intermediate state, and post-fusion hairpin state. During viral and target cell membrane fusion, the coiled coil regions (heptad repeats) assume a trimer-of-hairpins structure, positioning the fusion peptide in close proximity to the C-terminal region of the ectodomain. The formation of this structure appears to drive apposition and subsequent fusion of viral and target cell membranes. Membranes fusion leads to delivery of the nucleocapsid into the cytoplasm. This chain is Envelope glycoprotein (env), found in Galliformes.